Here is a 375-residue protein sequence, read N- to C-terminus: Serpentine receptor class alpha-39 (375 aa).

Helical transmembrane passes span 17-37 (LFAIIFQGTSGYLTFPILFII), 51-71 (LVFLMMLNVVSCLLLGGLTAW), 99-119 (IRGTFLFAFCLVTTSHAGILL), 138-158 (LGTILAIVAVAVAATAIFILL), 183-203 (VYVMFFVQLLLDAVISIVHLV), 236-256 (TPLLILSNVTIGVYIFIVSVF), and 275-295 (LFIMPHMPFMFTSLILVELWL).

It belongs to the nematode receptor-like protein sra family.

It localises to the membrane. This is Serpentine receptor class alpha-39 (sra-39) from Caenorhabditis elegans.